Reading from the N-terminus, the 188-residue chain is Pro-adrenomedullin (188 aa).

The first 21 residues, 1-21, serve as a signal peptide directing secretion; the sequence is MKLVPVALLYLGSLAFLGVDT. Residue arginine 41 is modified to Arginine amide. Residues 45-92 constitute a propeptide that is removed on maturation; it reads ELRESSSYPTGLADVKAGPVQTLIRPQDVKGASRSPQASSPDAARIRV. The segment at 69-89 is disordered; it reads RPQDVKGASRSPQASSPDAAR. Cysteine 110 and cysteine 115 are oxidised to a cystine. Residues 129 to 175 are disordered; the sequence is DKDKDGSAPRSKISPQGYGRRRRRSLPEAGLGRTLLQPPEPKLRGAP. Tyrosine 146 is modified (tyrosine amide). Residues 153-188 constitute a propeptide, preproAM C-terminal fragment; that stretch reads SLPEAGLGRTLLQPPEPKLRGAPDSRVHQVLATLRI.

The protein belongs to the adrenomedullin family.

The protein resides in the secreted. Its function is as follows. Adrenomedullin/ADM and proadrenomedullin N-20 terminal peptide/PAMP are peptide hormones that act as potent hypotensive and vasodilatator agents. Numerous actions have been reported most related to the physiologic control of fluid and electrolyte homeostasis. ADM function is mediated by the CALCRL-RAMP2 and CALCRL-RAMP3 receptor complexes with ADM showing the highest potency for the CALCRL-RAMP2 complex. The polypeptide is Pro-adrenomedullin (ADM) (Bos taurus (Bovine)).